We begin with the raw amino-acid sequence, 394 residues long: Acetyl-CoA acetyltransferase (394 aa).

C89 serves as the catalytic Acyl-thioester intermediate. Active-site proton acceptor residues include H350 and C380.

This sequence belongs to the thiolase-like superfamily. Thiolase family. In terms of assembly, homotetramer.

Its subcellular location is the cytoplasm. The enzyme catalyses 2 acetyl-CoA = acetoacetyl-CoA + CoA. It participates in biopolymer metabolism; poly-(R)-3-hydroxybutanoate biosynthesis. The protein operates within metabolic intermediate biosynthesis; (R)-mevalonate biosynthesis; (R)-mevalonate from acetyl-CoA: step 1/3. The polypeptide is Acetyl-CoA acetyltransferase (Thiocystis violacea).